Consider the following 180-residue polypeptide: Adenine phosphoribosyltransferase (180 aa).

This sequence belongs to the purine/pyrimidine phosphoribosyltransferase family. As to quaternary structure, homodimer.

The protein localises to the cytoplasm. It catalyses the reaction AMP + diphosphate = 5-phospho-alpha-D-ribose 1-diphosphate + adenine. Its pathway is purine metabolism; AMP biosynthesis via salvage pathway; AMP from adenine: step 1/1. Catalyzes a salvage reaction resulting in the formation of AMP, that is energically less costly than de novo synthesis. The chain is Adenine phosphoribosyltransferase from Rhizobium johnstonii (strain DSM 114642 / LMG 32736 / 3841) (Rhizobium leguminosarum bv. viciae).